Reading from the N-terminus, the 180-residue chain is MAVLASSTEPEPTESLLQQTNELLIIGKGAIVYKEFTTGVDARIIDSQTIGIGIPFNYYPFMCMVLDDAGNGIPMQEFTSAPGSLTVKVAATLDSTKTYKIIAFLIGDSMKIITSIQSQSGTVTEIAPGFGIFKVIYNDTEGTDTLTINYDDGTSETITVDKSNLWTVLPMQLPDAERVA.

This is an uncharacterized protein from Methanocaldococcus jannaschii (strain ATCC 43067 / DSM 2661 / JAL-1 / JCM 10045 / NBRC 100440) (Methanococcus jannaschii).